A 201-amino-acid polypeptide reads, in one-letter code: MKSLQIICLLFVLVARGSCHSCEICHNFGKDCQSDETEECASAEDQCGTVLMEVSSAPISFRSIHRKCFSSSLCKLERFDINIGHDSYLRGRIHCCDEARCEAQQFPGLPLSFPNGYHCPGILGVFSVDSSEHEAICRGTETKCINLAGFRKERYPIDIAYNIKGCTSSCPELRLNRTHEEHGNGLIKVECTEASKITPSE.

Residues 1 to 19 (MKSLQIICLLFVLVARGSC) form the signal peptide. Disulfide bonds link C22–C47, C25–C32, C40–C68, C74–C95, C96–C101, C119–C144, C137–C166, and C170–C191. N-linked (GlcNAc...) asparagine glycosylation occurs at N176.

It belongs to the CNF-like-inhibitor family. Heterotrimer of 2 subunits A and 1 subunit B; non-covalently linked. In terms of processing, N-glycosylated, probably by biantennary structure. Glycosylation does not change PLA2 inhibitory activity. Expressed by the liver.

It localises to the secreted. In terms of biological role, inhibits the enzymatic activity of all phospholipase A2 tested, binding them with micromole to nanomole affinity. This chain is Phospholipase A2 inhibitor NAI, found in Notechis ater (Black tiger snake).